The following is a 1372-amino-acid chain: uncharacterized protein (1372 aa).

The segment at 1–67 is disordered; sequence MEATDQEVML…PPAPSKNPMQ (67 aa). The span at 17 to 28 shows a compositional bias: polar residues; that stretch reads MSTSATSSTNGG. Residues 75-143 are a coiled coil; that stretch reads NLYQTAQEQL…LEEHDRLRRK (69 aa). Disordered regions lie at residues 178-199, 238-287, 380-414, 427-447, and 486-531; these read NDLS…LSGD, HINR…QASS, EVSN…EVRR, QSLE…VPVP, and EERM…DSGI. Low complexity-rich tracts occupy residues 184–198 and 238–251; these read GIGT…SLSG and HINR…HGNG. 2 stretches are compositionally biased toward polar residues: residues 257-287 and 399-408; these read TGPS…QASS and TNGNSATTAP. Positions 409 to 438 form a coiled coil; sequence KSEVRRLSGDISSIRDRMQSLEQQRKAFSS. The segment covering 486–499 has biased composition (basic and acidic residues); the sequence is EERMRQQQQKEKHS. The segment covering 514–523 has biased composition (low complexity); that stretch reads ALIIEEPPVA. A coiled-coil region spans residues 539 to 580; it reads LQQQQQLNAAIAALALEERQLEEAANAVNQIEAEFDELTDLH. Over residues 652–673 the composition is skewed to low complexity; it reads VSKSGPTPNPTSTPNMVSSSPN. Disordered stretches follow at residues 652-679, 799-820, 860-897, 1151-1181, and 1231-1250; these read VSKS…LRRK, SRQL…RSEH, SQSD…PKRV, SSQM…PIPK, and SPPS…SPTK. Polar residues-rich tracts occupy residues 860–871 and 1151–1160; these read SQSDSKSLTSPI and SSQMMKTSLP.

This is an uncharacterized protein from Drosophila melanogaster (Fruit fly).